A 51-amino-acid chain; its full sequence is Large ribosomal subunit protein eL39 (51 aa).

It belongs to the eukaryotic ribosomal protein eL39 family.

The chain is Large ribosomal subunit protein eL39 from Thermococcus onnurineus (strain NA1).